A 395-amino-acid polypeptide reads, in one-letter code: Testis-expressed protein 44 (395 aa).

Disordered regions lie at residues 1 to 32, 46 to 100, 133 to 215, and 235 to 258; these read MALP…PLTA, WQDI…LQVS, KMSQ…SDES, and FPPP…GRRP. The segment covering 53–65 has biased composition (polar residues); that stretch reads SFKTATPRAISTS. The segment covering 87 to 98 has biased composition (low complexity); the sequence is PLLPSQNPSPLQ. Residues 192 to 207 show a composition bias toward basic and acidic residues; that stretch reads SAEEKAEHPKAPHPEA. Ser333 bears the Phosphoserine mark.

As to expression, testis. Detected in germ cells at all stages of the seminiferous epithelium, strong expression in elongating spermatids (at protein level).

The protein localises to the cytoplasm. The protein is Testis-expressed protein 44 of Homo sapiens (Human).